We begin with the raw amino-acid sequence, 202 residues long: Large ribosomal subunit protein bL25 (202 aa).

The protein belongs to the bacterial ribosomal protein bL25 family. CTC subfamily. Part of the 50S ribosomal subunit; part of the 5S rRNA/L5/L18/L25 subcomplex. Contacts the 5S rRNA. Binds to the 5S rRNA independently of L5 and L18.

Its function is as follows. This is one of the proteins that binds to the 5S RNA in the ribosome where it forms part of the central protuberance. This Clostridium perfringens (strain ATCC 13124 / DSM 756 / JCM 1290 / NCIMB 6125 / NCTC 8237 / Type A) protein is Large ribosomal subunit protein bL25.